A 352-amino-acid chain; its full sequence is Fe(3+) ions import ATP-binding protein FbpC 1 (352 aa).

Positions 11–241 (VELKHITKRF…PASRFMASFM (231 aa)) constitute an ABC transporter domain. 43–50 (GPSGCGKT) is an ATP binding site.

The protein belongs to the ABC transporter superfamily. Fe(3+) ion importer (TC 3.A.1.10) family. In terms of assembly, the complex is composed of two ATP-binding proteins (FbpC), two transmembrane proteins (FbpB) and a solute-binding protein (FbpA).

Its subcellular location is the cell inner membrane. It catalyses the reaction Fe(3+)(out) + ATP + H2O = Fe(3+)(in) + ADP + phosphate + H(+). Its function is as follows. Part of the ABC transporter complex FbpABC involved in Fe(3+) ions import. Responsible for energy coupling to the transport system. The protein is Fe(3+) ions import ATP-binding protein FbpC 1 of Pectobacterium atrosepticum (strain SCRI 1043 / ATCC BAA-672) (Erwinia carotovora subsp. atroseptica).